The chain runs to 326 residues: MVLTEQKRKYMEKLSDENGIISALAFDQRGALKRLMAQYQEAEPTVEQMEDLKVLVAEELTPYASSMLLDPEYGLPATKALDKNAGLLLAYEKTGYDTSSTKRLPDCLDVWSAKRIKEQGSDAVKFLLYYDVDSSDELNQQKQAYIERVGSECVAEDIPFFLEILAYDEKIADAGSAEYAKVKPRKVIEAMKVFSDSRFNIDVLKVEVPVNVKYVEGFGDGEVIHTRGEAAAFFKQQDEATNLPYIYLSAGVAAKLFQETLIFAHESGANFNGVLCGRATWAGSVKEYIEQGEEAARQWLRTTGYQNIEELNQVLKQTATSWKERV.

Belongs to the aldolase LacD family.

The enzyme catalyses D-tagatofuranose 1,6-bisphosphate = D-glyceraldehyde 3-phosphate + dihydroxyacetone phosphate. The protein operates within carbohydrate metabolism; D-tagatose 6-phosphate degradation; D-glyceraldehyde 3-phosphate and glycerone phosphate from D-tagatose 6-phosphate: step 2/2. This Streptococcus agalactiae serotype III (strain NEM316) protein is Tagatose 1,6-diphosphate aldolase 2 (lacD2).